Consider the following 189-residue polypeptide: Dihydrofolate reductase (189 aa).

The region spanning 3-184 (SLNSIVAVCQ…IQYKFEVYQK (182 aa)) is the DHFR domain. NADP(+)-binding positions include alanine 9 and 15-21 (GIGKDGN). 30 to 35 (EYKYFQ) contacts substrate. 54-56 (KKT) is a binding site for NADP(+). Substrate contacts are provided by asparagine 64 and arginine 70. NADP(+) contacts are provided by residues 76-78 (SRE) and 116-123 (GGTAVYKA).

The protein belongs to the dihydrofolate reductase family.

It carries out the reaction (6S)-5,6,7,8-tetrahydrofolate + NADP(+) = 7,8-dihydrofolate + NADPH + H(+). The protein operates within cofactor biosynthesis; tetrahydrofolate biosynthesis; 5,6,7,8-tetrahydrofolate from 7,8-dihydrofolate: step 1/1. Key enzyme in folate metabolism. Contributes to the de novo mitochondrial thymidylate biosynthesis pathway. Catalyzes an essential reaction for de novo glycine and purine synthesis, and for DNA precursor synthesis. May bind to mRNA. This is Dihydrofolate reductase (DHFR) from Gallus gallus (Chicken).